Reading from the N-terminus, the 312-residue chain is Ribosomal protein L11 methyltransferase (312 aa).

S-adenosyl-L-methionine-binding residues include T163, G184, D206, and N248.

Belongs to the methyltransferase superfamily. PrmA family.

It is found in the cytoplasm. The catalysed reaction is L-lysyl-[protein] + 3 S-adenosyl-L-methionine = N(6),N(6),N(6)-trimethyl-L-lysyl-[protein] + 3 S-adenosyl-L-homocysteine + 3 H(+). Methylates ribosomal protein L11. This chain is Ribosomal protein L11 methyltransferase, found in Clostridium botulinum (strain Hall / ATCC 3502 / NCTC 13319 / Type A).